Here is a 706-residue protein sequence, read N- to C-terminus: Semenogelin-2 (706 aa).

Positions 1-23 (MKSIILFVLSLLLILEKQAAVMG) are cleaved as a signal peptide. 3 disordered regions span residues 25 to 62 (KGGS…SKGS), 131 to 156 (KGGQ…KGIF), and 276 to 678 (NLNQ…SGAH). Residues 50-59 (GQKDKQHTES) show a composition bias toward basic and acidic residues. Positions 137 to 151 (HGTQNPSQDQGNSPS) are enriched in polar residues. The segment covering 297–308 (TEERQPNHEENS) has biased composition (basic and acidic residues). Polar residues predominate over residues 329 to 339 (KSQNQVTIPSQ). Residues 340–349 (DQEHGHKENK) are compositionally biased toward basic and acidic residues. The span at 389 to 399 (KSQNQVTIPSQ) shows a compositional bias: polar residues. Residues 400-409 (DQEHGHKENK) are compositionally biased toward basic and acidic residues. Residues 449-459 (KSQNQVTIPSQ) are compositionally biased toward polar residues. Over residues 460–469 (DQEHGHKENK) the composition is skewed to basic and acidic residues. Polar residues predominate over residues 509 to 519 (KSQNQVAIPSQ). The span at 520-529 (DQEHGHKENK) shows a compositional bias: basic and acidic residues. Polar residues predominate over residues 569-579 (KSQNQVTIPSQ). Over residues 580-589 (DQEHGHKENK) the composition is skewed to basic and acidic residues. Composition is skewed to polar residues over residues 611 to 622 (KDVSQSSLSFQT) and 630 to 653 (SQIQ…NSGK). A compositionally biased stretch (basic and acidic residues) spans 654–670 (SADREQDLLSHEQEGRY).

Belongs to the semenogelin family. Interacts with SERPINA5.

The protein localises to the secreted. In terms of biological role, participates in the formation of a gel matrix (sperm coagulum) entrapping the accessory gland secretions and ejaculated spermatozoa. In Macaca mulatta (Rhesus macaque), this protein is Semenogelin-2 (SEMG2).